A 322-amino-acid polypeptide reads, in one-letter code: tRNA dimethylallyltransferase (322 aa).

12-19 contributes to the ATP binding site; that stretch reads GPTAAGKT. A substrate-binding site is contributed by 14–19; that stretch reads TAAGKT. 2 interaction with substrate tRNA regions span residues 37 to 40 and 160 to 164; these read DSAL and QRLIR.

This sequence belongs to the IPP transferase family. Monomer. Requires Mg(2+) as cofactor.

The catalysed reaction is adenosine(37) in tRNA + dimethylallyl diphosphate = N(6)-dimethylallyladenosine(37) in tRNA + diphosphate. Functionally, catalyzes the transfer of a dimethylallyl group onto the adenine at position 37 in tRNAs that read codons beginning with uridine, leading to the formation of N6-(dimethylallyl)adenosine (i(6)A). This Pseudomonas putida (Arthrobacter siderocapsulatus) protein is tRNA dimethylallyltransferase.